A 484-amino-acid chain; its full sequence is Sperm motility kinase 2B (484 aa).

Residues 8–256 (YVMLETIGHG…VAEVMVHPWV (249 aa)) enclose the Protein kinase domain. ATP is bound by residues 14 to 22 (IGHGGCSKV) and Lys37. Residue Asp127 is the Proton acceptor of the active site. The 43-residue stretch at 272–314 (PLKPNPAIVKAMGYIGFQAQDIEDSLRQRKFNETMASYCLLKK) folds into the UBA domain. 2 stretches are compositionally biased toward polar residues: residues 356 to 373 (PTSLRLSANRQMSVCGRS) and 422 to 434 (SSDDSTEGHTSAS). Disordered regions lie at residues 356-400 (PTSL…TMDH) and 422-450 (SSDDSTEGHTSASAEDKPVRSRGWPRGIK).

This sequence belongs to the protein kinase superfamily. CAMK Ser/Thr protein kinase family. Smok subfamily. Testis-specific. Expressed in the testis from 22 days postpartum (22 dpp).

It carries out the reaction L-seryl-[protein] + ATP = O-phospho-L-seryl-[protein] + ADP + H(+). The catalysed reaction is L-threonyl-[protein] + ATP = O-phospho-L-threonyl-[protein] + ADP + H(+). In terms of biological role, may play a role in sperm motility, especially in the regulation of flagellar function. This Mus musculus (Mouse) protein is Sperm motility kinase 2B.